A 61-amino-acid polypeptide reads, in one-letter code: Large ribosomal subunit protein eL20 (61 aa).

The protein belongs to the eukaryotic ribosomal protein eL20 family. Part of the 50S ribosomal subunit. Binds 23S rRNA.

In Methanosarcina mazei (strain ATCC BAA-159 / DSM 3647 / Goe1 / Go1 / JCM 11833 / OCM 88) (Methanosarcina frisia), this protein is Large ribosomal subunit protein eL20.